The primary structure comprises 185 residues: Elongation factor P (185 aa).

This sequence belongs to the elongation factor P family.

It is found in the cytoplasm. The protein operates within protein biosynthesis; polypeptide chain elongation. In terms of biological role, involved in peptide bond synthesis. Stimulates efficient translation and peptide-bond synthesis on native or reconstituted 70S ribosomes in vitro. Probably functions indirectly by altering the affinity of the ribosome for aminoacyl-tRNA, thus increasing their reactivity as acceptors for peptidyl transferase. The polypeptide is Elongation factor P (Limosilactobacillus fermentum (strain NBRC 3956 / LMG 18251) (Lactobacillus fermentum)).